A 159-amino-acid polypeptide reads, in one-letter code: 2-C-methyl-D-erythritol 2,4-cyclodiphosphate synthase (159 aa).

The a divalent metal cation site is built by Asp10 and His12. Residues 10–12 (DVH) and 37–38 (HS) contribute to the 4-CDP-2-C-methyl-D-erythritol 2-phosphate site. His45 serves as a coordination point for a divalent metal cation. 4-CDP-2-C-methyl-D-erythritol 2-phosphate-binding positions include 59-61 (DIG), 64-68 (FPDTD), 103-109 (AQAPKML), 135-138 (TTTE), Phe142, and Arg145.

It belongs to the IspF family. Homotrimer. Requires a divalent metal cation as cofactor.

It catalyses the reaction 4-CDP-2-C-methyl-D-erythritol 2-phosphate = 2-C-methyl-D-erythritol 2,4-cyclic diphosphate + CMP. Its pathway is isoprenoid biosynthesis; isopentenyl diphosphate biosynthesis via DXP pathway; isopentenyl diphosphate from 1-deoxy-D-xylulose 5-phosphate: step 4/6. Functionally, involved in the biosynthesis of isopentenyl diphosphate (IPP) and dimethylallyl diphosphate (DMAPP), two major building blocks of isoprenoid compounds. Catalyzes the conversion of 4-diphosphocytidyl-2-C-methyl-D-erythritol 2-phosphate (CDP-ME2P) to 2-C-methyl-D-erythritol 2,4-cyclodiphosphate (ME-CPP) with a corresponding release of cytidine 5-monophosphate (CMP). This Francisella philomiragia subsp. philomiragia (strain ATCC 25017 / CCUG 19701 / FSC 153 / O#319-036) protein is 2-C-methyl-D-erythritol 2,4-cyclodiphosphate synthase.